Reading from the N-terminus, the 406-residue chain is MSLIRVNGEAFKFSLESLEEDPFETKETLEILVKQTSVVLLAAGESRRFSQTIKKQWLRSNHTPLWLSVYESFKEALDFKEIVLVVSELDYIYIQRHYPEIKLIKGGASRQESVRNALKIIDSAYTLTSDVARGLANMETLKSLFLTLQQTSHYCIAPYLPCYDTAIYYNEALDREAIKLIQTPQLSHTKTLQSALNQGDFKDESSAILQAFPNSVSYIEGSKDLHKLTTSDDLKHFAFFFNPAKDTFIGMGFDTHAFIKDKPMVLGGVVLDCEFGLKAHSDGDALLHAVIDAVLGAIKGGDIGEWFPDNDPKYKNASSKELLKIVLDFSQSIGFELFEMGATIFSEIPKITPYKPAILENLSQLLGLEKSQISLKATTMEKMGFIGKQEGLLVQAHVSMRYKQKL.

Positions 1–247 (MSLIRVNGEA…AFFFNPAKDT (247 aa)) are 2-C-methyl-D-erythritol 4-phosphate cytidylyltransferase. The interval 248-406 (FIGMGFDTHA…HVSMRYKQKL (159 aa)) is 2-C-methyl-D-erythritol 2,4-cyclodiphosphate synthase. Residues aspartate 254 and histidine 256 each contribute to the a divalent metal cation site. 4-CDP-2-C-methyl-D-erythritol 2-phosphate contacts are provided by residues 254-256 (DTH) and 280-281 (HS). Residue histidine 288 coordinates a divalent metal cation. 4-CDP-2-C-methyl-D-erythritol 2-phosphate contacts are provided by residues 302 to 304 (DIG), 307 to 311 (FPDND), 378 to 381 (TTME), phenylalanine 385, and lysine 388.

The protein in the N-terminal section; belongs to the IspD/TarI cytidylyltransferase family. IspD subfamily. This sequence in the C-terminal section; belongs to the IspF family. A divalent metal cation serves as cofactor.

The catalysed reaction is 2-C-methyl-D-erythritol 4-phosphate + CTP + H(+) = 4-CDP-2-C-methyl-D-erythritol + diphosphate. It catalyses the reaction 4-CDP-2-C-methyl-D-erythritol 2-phosphate = 2-C-methyl-D-erythritol 2,4-cyclic diphosphate + CMP. Its pathway is isoprenoid biosynthesis; isopentenyl diphosphate biosynthesis via DXP pathway; isopentenyl diphosphate from 1-deoxy-D-xylulose 5-phosphate: step 2/6. The protein operates within isoprenoid biosynthesis; isopentenyl diphosphate biosynthesis via DXP pathway; isopentenyl diphosphate from 1-deoxy-D-xylulose 5-phosphate: step 4/6. Functionally, bifunctional enzyme that catalyzes the formation of 4-diphosphocytidyl-2-C-methyl-D-erythritol from CTP and 2-C-methyl-D-erythritol 4-phosphate (MEP) (IspD), and catalyzes the conversion of 4-diphosphocytidyl-2-C-methyl-D-erythritol 2-phosphate (CDP-ME2P) to 2-C-methyl-D-erythritol 2,4-cyclodiphosphate (ME-CPP) with a corresponding release of cytidine 5-monophosphate (CMP) (IspF). This Helicobacter pylori (strain HPAG1) protein is Bifunctional enzyme IspD/IspF.